The chain runs to 762 residues: Centrosomal protein of 85 kDa (762 aa).

Disordered stretches follow at residues Met-1 to Gly-26 and Val-94 to Pro-119. Composition is skewed to polar residues over residues His-14–Gly-26 and Thr-98–Val-111. Ser-17 carries the phosphoserine modification. 2 positions are modified to phosphoserine: Ser-126 and Ser-141. The segment at Gly-257–Ala-433 is mediates interaction with NEK2 and is required for its function in the suppression of centrosome disjunction. Coiled coils occupy residues Glu-334–Gln-657 and Pro-723–Arg-750. Residues Leu-434–Ile-476 form a required for centrosome localization and for its function in the suppression of centrosome disjunction region. 2 stretches are compositionally biased toward basic and acidic residues: residues Lys-443 to Ile-455 and Gln-463 to Gln-474. Disordered regions lie at residues Lys-443–Gln-474 and Glu-541–Glu-570. At Ser-623 the chain carries Phosphoserine.

The protein belongs to the CEP85 family. In terms of assembly, homodimer. Interacts with STIL (via N-terminus); this interaction is essential for robust PLK4 activation and efficient centriole assembly and for PLK4-dependent cell migration. Interacts with PLK4; required for CEP85 to be able to drive centriole duplication and cell migration.

Its subcellular location is the cytoplasm. The protein localises to the cytoskeleton. It is found in the microtubule organizing center. It localises to the centrosome. The protein resides in the spindle pole. Its subcellular location is the nucleus. The protein localises to the nucleolus. It is found in the centriole. It localises to the cell cortex. Functionally, acts as a regulator of centriole duplication through a direct interaction with STIL, a key factor involved in the early steps of centriole formation. The CEP85-STIL protein complex acts as a modulator of PLK4-driven cytoskeletal rearrangements and directional cell motility. Acts as a negative regulator of NEK2 to maintain the centrosome integrity in interphase. Suppresses centrosome disjunction by inhibiting NEK2 kinase activity. The chain is Centrosomal protein of 85 kDa from Homo sapiens (Human).